The chain runs to 352 residues: DNA polymerase IV (352 aa).

The UmuC domain maps to 4 to 185 (IIHVDMDCFF…LPLSKIPGVG (182 aa)). The Mg(2+) site is built by Asp-8 and Asp-103. Residue Glu-104 is part of the active site.

This sequence belongs to the DNA polymerase type-Y family. As to quaternary structure, monomer. Mg(2+) is required as a cofactor.

The protein resides in the cytoplasm. The catalysed reaction is DNA(n) + a 2'-deoxyribonucleoside 5'-triphosphate = DNA(n+1) + diphosphate. Poorly processive, error-prone DNA polymerase involved in untargeted mutagenesis. Copies undamaged DNA at stalled replication forks, which arise in vivo from mismatched or misaligned primer ends. These misaligned primers can be extended by PolIV. Exhibits no 3'-5' exonuclease (proofreading) activity. May be involved in translesional synthesis, in conjunction with the beta clamp from PolIII. The polypeptide is DNA polymerase IV (Yersinia enterocolitica serotype O:8 / biotype 1B (strain NCTC 13174 / 8081)).